Consider the following 163-residue polypeptide: SsrA-binding protein (163 aa).

A compositionally biased stretch (basic and acidic residues) spans 138–157 (EDRRGAIAERESKREMDRAL). The segment at 138-163 (EDRRGAIAERESKREMDRALARGRRR) is disordered.

It belongs to the SmpB family.

It localises to the cytoplasm. Its function is as follows. Required for rescue of stalled ribosomes mediated by trans-translation. Binds to transfer-messenger RNA (tmRNA), required for stable association of tmRNA with ribosomes. tmRNA and SmpB together mimic tRNA shape, replacing the anticodon stem-loop with SmpB. tmRNA is encoded by the ssrA gene; the 2 termini fold to resemble tRNA(Ala) and it encodes a 'tag peptide', a short internal open reading frame. During trans-translation Ala-aminoacylated tmRNA acts like a tRNA, entering the A-site of stalled ribosomes, displacing the stalled mRNA. The ribosome then switches to translate the ORF on the tmRNA; the nascent peptide is terminated with the 'tag peptide' encoded by the tmRNA and targeted for degradation. The ribosome is freed to recommence translation, which seems to be the essential function of trans-translation. This Anaeromyxobacter dehalogenans (strain 2CP-1 / ATCC BAA-258) protein is SsrA-binding protein.